We begin with the raw amino-acid sequence, 92 residues long: MARSLKKGPFVDDHLMSKIAKLNETEQKQVVKTWSRRSTIFPQFIGHTIAVYDGRKHVPVYITEDMVGHKLGEFAPTRTYKGHDADDKKTRR.

Belongs to the universal ribosomal protein uS19 family.

Functionally, protein S19 forms a complex with S13 that binds strongly to the 16S ribosomal RNA. This Bacillus cytotoxicus (strain DSM 22905 / CIP 110041 / 391-98 / NVH 391-98) protein is Small ribosomal subunit protein uS19.